A 460-amino-acid polypeptide reads, in one-letter code: 3-ketoacyl-CoA synthase 7 (460 aa).

The chain crosses the membrane as a helical span at residues 21-41; that stretch reads FHQFLVASACVLIAVFGYYFF. Residues 38–328 form the FAE domain; it reads YYFFKPRCII…YIISFIQRKW (291 aa). Active-site residues include C183, H262, H345, H349, and N382.

It belongs to the thiolase-like superfamily. Chalcone/stilbene synthases family. As to expression, expressed in flowers.

The protein resides in the membrane. It catalyses the reaction a very-long-chain acyl-CoA + malonyl-CoA + H(+) = a very-long-chain 3-oxoacyl-CoA + CO2 + CoA. It participates in lipid metabolism; fatty acid biosynthesis. The sequence is that of 3-ketoacyl-CoA synthase 7 from Arabidopsis thaliana (Mouse-ear cress).